The following is a 256-amino-acid chain: Protein FixA (256 aa).

This sequence belongs to the ETF beta-subunit/FixA family. Heterodimer of FixA and FixB.

It functions in the pathway amine and polyamine metabolism; carnitine metabolism. Required for anaerobic carnitine reduction. May bring reductant to CaiA. The chain is Protein FixA from Salmonella dublin (strain CT_02021853).